The primary structure comprises 199 residues: Inner membrane protein E199L (199 aa).

Residues 150 to 170 (INVMNHPFLTLILIILILIII) traverse the membrane as a helical segment.

This sequence belongs to the asfivirus E199L family. As to quaternary structure, interacts with host PYCR2; this interaction results in autophagy activation. Post-translationally, contains intramolecular disulfide bonds.

The protein resides in the virion membrane. It localises to the host membrane. Essential for viral fusion with host endosomal membrane and core release. Not required for virus morphogenesis and egress. Induces complete autophagy through the interaction with and down-regulation of host PYCR2. The sequence is that of Inner membrane protein E199L from Ornithodoros (relapsing fever ticks).